The following is a 472-amino-acid chain: Ribosomal protein uS12 methylthiotransferase RimO (472 aa).

The MTTase N-terminal domain maps to 33–143; sequence NRIGFVSLGC…VLKHVHKYVP (111 aa). C42, C78, C107, C175, C179, and C182 together coordinate [4Fe-4S] cluster. The Radical SAM core domain occupies 161–398; sequence LTPKHYAYLK…MELQAEISAE (238 aa). In terms of domain architecture, TRAM spans 401-467; sequence ARFVGRTLDI…EHDLWAEVVD (67 aa).

It belongs to the methylthiotransferase family. RimO subfamily. It depends on [4Fe-4S] cluster as a cofactor.

The protein resides in the cytoplasm. It carries out the reaction L-aspartate(89)-[ribosomal protein uS12]-hydrogen + (sulfur carrier)-SH + AH2 + 2 S-adenosyl-L-methionine = 3-methylsulfanyl-L-aspartate(89)-[ribosomal protein uS12]-hydrogen + (sulfur carrier)-H + 5'-deoxyadenosine + L-methionine + A + S-adenosyl-L-homocysteine + 2 H(+). Functionally, catalyzes the methylthiolation of an aspartic acid residue of ribosomal protein uS12. The polypeptide is Ribosomal protein uS12 methylthiotransferase RimO (Shewanella putrefaciens (strain CN-32 / ATCC BAA-453)).